The primary structure comprises 95 residues: Translation initiation factor 1A (95 aa).

The region spanning 7 to 81 is the S1-like domain; it reads GRKNLRMPED…DKADVTWRYE (75 aa).

The protein belongs to the eIF-1A family.

Seems to be required for maximal rate of protein biosynthesis. Enhances ribosome dissociation into subunits and stabilizes the binding of the initiator Met-tRNA(I) to 40 S ribosomal subunits. This Halobacterium salinarum (strain ATCC 29341 / DSM 671 / R1) protein is Translation initiation factor 1A (eIF1A).